The chain runs to 354 residues: GTPase Obg (354 aa).

An Obg domain is found at 1 to 159 (MKFLDQCKIY…LWVWLRLKLI (159 aa)). Positions 160-328 (ADVGLVGLPN…LLRAAFTQVR (169 aa)) constitute an OBG-type G domain. Residues 166–173 (GLPNAGKS), 191–195 (FTTLT), 213–216 (DIPG), 280–283 (NKVD), and 309–311 (SGV) contribute to the GTP site. 2 residues coordinate Mg(2+): Ser-173 and Thr-193. Residues 333-354 (ETPAEAAIDEAPEEETPGGWQP) form a disordered region. The span at 339 to 348 (AIDEAPEEET) shows a compositional bias: acidic residues.

This sequence belongs to the TRAFAC class OBG-HflX-like GTPase superfamily. OBG GTPase family. Monomer. Mg(2+) is required as a cofactor.

The protein resides in the cytoplasm. Functionally, an essential GTPase which binds GTP, GDP and possibly (p)ppGpp with moderate affinity, with high nucleotide exchange rates and a fairly low GTP hydrolysis rate. Plays a role in control of the cell cycle, stress response, ribosome biogenesis and in those bacteria that undergo differentiation, in morphogenesis control. This chain is GTPase Obg, found in Caulobacter sp. (strain K31).